We begin with the raw amino-acid sequence, 221 residues long: Probable septum site-determining protein MinC (221 aa).

Belongs to the MinC family. As to quaternary structure, interacts with MinD and FtsZ.

Cell division inhibitor that blocks the formation of polar Z ring septums. Rapidly oscillates between the poles of the cell to destabilize FtsZ filaments that have formed before they mature into polar Z rings. Prevents FtsZ polymerization. The polypeptide is Probable septum site-determining protein MinC (Shewanella oneidensis (strain ATCC 700550 / JCM 31522 / CIP 106686 / LMG 19005 / NCIMB 14063 / MR-1)).